Consider the following 368-residue polypeptide: Probable pectate lyase 4 (368 aa).

The first 25 residues, 1–25 (MASLVVIVSLLLAAFASPLLETAHS), serve as a signal peptide directing secretion. N27 carries N-linked (GlcNAc...) asparagine glycosylation. Positions 167, 191, and 195 each coordinate Ca(2+). Residue R247 is part of the active site.

This sequence belongs to the polysaccharide lyase 1 family. Requires Ca(2+) as cofactor.

The catalysed reaction is Eliminative cleavage of (1-&gt;4)-alpha-D-galacturonan to give oligosaccharides with 4-deoxy-alpha-D-galact-4-enuronosyl groups at their non-reducing ends.. Its pathway is glycan metabolism; pectin degradation; 2-dehydro-3-deoxy-D-gluconate from pectin: step 2/5. The polypeptide is Probable pectate lyase 4 (Arabidopsis thaliana (Mouse-ear cress)).